The sequence spans 329 residues: Quinate dehydrogenase (329 aa).

The enzyme catalyses L-quinate + NAD(+) = 3-dehydroquinate + NADH + H(+). It participates in aromatic compound metabolism; 3,4-dihydroxybenzoate biosynthesis; 3-dehydroquinate from D-quinate (NAD(+) route): step 1/1. In Emericella nidulans (strain FGSC A4 / ATCC 38163 / CBS 112.46 / NRRL 194 / M139) (Aspergillus nidulans), this protein is Quinate dehydrogenase (qutB).